A 349-amino-acid chain; its full sequence is Anthranilate phosphoribosyltransferase (349 aa).

5-phospho-alpha-D-ribose 1-diphosphate is bound by residues glycine 82, 85-86, 92-95, 110-118, and serine 122; these read GD, NVST, and KHGNRAVSG. Glycine 82 contributes to the anthranilate binding site. Serine 94 lines the Mg(2+) pocket. Anthranilate is bound at residue asparagine 113. Arginine 168 contributes to the anthranilate binding site. The Mg(2+) site is built by aspartate 227 and glutamate 228.

The protein belongs to the anthranilate phosphoribosyltransferase family. In terms of assembly, homodimer. Mg(2+) is required as a cofactor.

It carries out the reaction N-(5-phospho-beta-D-ribosyl)anthranilate + diphosphate = 5-phospho-alpha-D-ribose 1-diphosphate + anthranilate. The protein operates within amino-acid biosynthesis; L-tryptophan biosynthesis; L-tryptophan from chorismate: step 2/5. Catalyzes the transfer of the phosphoribosyl group of 5-phosphorylribose-1-pyrophosphate (PRPP) to anthranilate to yield N-(5'-phosphoribosyl)-anthranilate (PRA). The polypeptide is Anthranilate phosphoribosyltransferase (Pseudomonas putida (strain ATCC 47054 / DSM 6125 / CFBP 8728 / NCIMB 11950 / KT2440)).